A 509-amino-acid chain; its full sequence is tRNA-2-methylthio-N(6)-dimethylallyladenosine synthase (509 aa).

Positions 1 to 15 (MNEQQRLASRQANSS) are enriched in polar residues. Residues 1 to 25 (MNEQQRLASRQANSSTKKEEKDYSK) form a disordered region. Basic and acidic residues predominate over residues 16–25 (TKKEEKDYSK). The region spanning 66-184 (RKFYIRTYGC…LPYILKDAMF (119 aa)) is the MTTase N-terminal domain. Residues C75, C111, C145, C221, C225, and C228 each contribute to the [4Fe-4S] cluster site. In terms of domain architecture, Radical SAM core spans 207–437 (RRGDIKAWVN…NTLVNEYGVN (231 aa)). Residues 440 to 503 (KRYIGQIVEV…TWSLNGELVK (64 aa)) enclose the TRAM domain.

Belongs to the methylthiotransferase family. MiaB subfamily. Monomer. [4Fe-4S] cluster is required as a cofactor.

It is found in the cytoplasm. The catalysed reaction is N(6)-dimethylallyladenosine(37) in tRNA + (sulfur carrier)-SH + AH2 + 2 S-adenosyl-L-methionine = 2-methylsulfanyl-N(6)-dimethylallyladenosine(37) in tRNA + (sulfur carrier)-H + 5'-deoxyadenosine + L-methionine + A + S-adenosyl-L-homocysteine + 2 H(+). In terms of biological role, catalyzes the methylthiolation of N6-(dimethylallyl)adenosine (i(6)A), leading to the formation of 2-methylthio-N6-(dimethylallyl)adenosine (ms(2)i(6)A) at position 37 in tRNAs that read codons beginning with uridine. This is tRNA-2-methylthio-N(6)-dimethylallyladenosine synthase from Bacillus mycoides (strain KBAB4) (Bacillus weihenstephanensis).